Reading from the N-terminus, the 501-residue chain is Probable leucine aminopeptidase 2 (501 aa).

Positions 1-18 (MVTMKLLYLTSFASLAVA) are cleaved as a signal peptide. The region spanning 119–216 (SPSVNATAPL…ADGQALIQMI (98 aa)) is the PA domain. N-linked (GlcNAc...) asparagine glycosylation is found at N123 and N233. The Zn(2+) site is built by H257 and D269. The active-site Proton acceptor is E301. A Zn(2+)-binding site is contributed by E302. Residue N316 is glycosylated (N-linked (GlcNAc...) asparagine). A Zn(2+)-binding site is contributed by D330. N-linked (GlcNAc...) asparagine glycosylation is present at N350. H428 contributes to the Zn(2+) binding site. N-linked (GlcNAc...) asparagine glycans are attached at residues N433 and N467. A disordered region spans residues 480-501 (AMKRTPHTHTGGTGCYKDRVEQ).

It belongs to the peptidase M28 family. M28A subfamily. Monomer. The cofactor is Zn(2+).

It localises to the secreted. Functionally, extracellular aminopeptidase that releases a wide variety of amino acids from natural peptides and contributes to pathogenicity. In Aspergillus fumigatus (strain ATCC MYA-4609 / CBS 101355 / FGSC A1100 / Af293) (Neosartorya fumigata), this protein is Probable leucine aminopeptidase 2 (lap2).